The primary structure comprises 144 residues: Giant hemoglobins B chain (144 aa).

The Globin domain maps to 3 to 144; it reads VCGPLQRLKV…LNVITNGIQG (142 aa). Histidine 96 provides a ligand contact to heme b.

It belongs to the globin family. In terms of assembly, part of giant hemoglobin C1, V1 and V2. This worm has three different extracellular Hbs: two dissolved in the vascular blood, V1 (CA. 3,500 kDa) and V2 (CA. 400 kDa), and one in the coelomic fluid, C1 (CA. 400 kDa). V1 consists of four heme-containing, globin chains (B-E) and four linker chains (L1-L4). V2 consists of six globin chains (A-F) and C1 consists of five globin chains (A-E).

The protein resides in the secreted. It localises to the extracellular space. The chain is Giant hemoglobins B chain from Riftia pachyptila (Vent tube worm).